Consider the following 249-residue polypeptide: Cytochrome c oxidase subunit 2 (249 aa).

2 helical membrane-spanning segments follow: residues 40–60 (NIMF…YTIT) and 81–101 (IIWT…SFIL). Histidine 184, cysteine 219, glutamate 221, cysteine 223, histidine 227, and methionine 230 together coordinate Cu cation. Glutamate 221 is a Mg(2+) binding site.

It belongs to the cytochrome c oxidase subunit 2 family. Component of the cytochrome c oxidase (complex IV, CIV), a multisubunit enzyme composed of a catalytic core of 3 subunits and several supernumerary subunits. The complex exists as a monomer or a dimer and forms supercomplexes (SCs) in the inner mitochondrial membrane with ubiquinol-cytochrome c oxidoreductase (cytochrome b-c1 complex, complex III, CIII). Cu cation serves as cofactor.

Its subcellular location is the mitochondrion inner membrane. It carries out the reaction 4 Fe(II)-[cytochrome c] + O2 + 8 H(+)(in) = 4 Fe(III)-[cytochrome c] + 2 H2O + 4 H(+)(out). Component of the cytochrome c oxidase, the last enzyme in the mitochondrial electron transport chain which drives oxidative phosphorylation. The respiratory chain contains 3 multisubunit complexes succinate dehydrogenase (complex II, CII), ubiquinol-cytochrome c oxidoreductase (cytochrome b-c1 complex, complex III, CIII) and cytochrome c oxidase (complex IV, CIV), that cooperate to transfer electrons derived from NADH and succinate to molecular oxygen, creating an electrochemical gradient over the inner membrane that drives transmembrane transport and the ATP synthase. Cytochrome c oxidase is the component of the respiratory chain that catalyzes the reduction of oxygen to water. Electrons originating from reduced cytochrome c in the intermembrane space (IMS) are transferred via the dinuclear copper A center (CU(A)) of subunit 2 and heme A of subunit 1 to the active site in subunit 1, a binuclear center (BNC) formed by heme A3 and copper B (CU(B)). The BNC reduces molecular oxygen to 2 water molecules using 4 electrons from cytochrome c in the IMS and 4 protons from the mitochondrial matrix. This is Cytochrome c oxidase subunit 2 (COX2) from Vanderwaltozyma polyspora (strain ATCC 22028 / DSM 70294 / BCRC 21397 / CBS 2163 / NBRC 10782 / NRRL Y-8283 / UCD 57-17) (Kluyveromyces polysporus).